The primary structure comprises 648 residues: UDP-galactose:fucoside alpha-3-galactosyltransferase (648 aa).

WD repeat units lie at residues 320-358 (NHTD…GNDT), 372-420 (HKRG…IQTF), 422-461 (GHTG…FKRV), 464-505 (GHNG…NIIK), 507-546 (NQGG…NFND), 556-595 (NENS…NNNN), and 617-648 (HLNS…SWDL).

This sequence belongs to the glycosyltransferase 77 family. It depends on Mn(2+) as a cofactor.

Its subcellular location is the cytoplasm. The catalysed reaction is an alpha-L-fucosyl-(1-&gt;2)-beta-D-galactosyl derivative + UDP-alpha-D-galactose = an alpha-D-galactosyl-(1-&gt;3)-[alpha-L-fucosyl-(1-&gt;2)]-beta-D-galactosyl derivative + UDP + H(+). It functions in the pathway protein modification; protein glycosylation. Stimulated by dithiothreitol (DTT) in vitro. Totally inhibited by EDTA. Its function is as follows. Specifically catalyzes the transfer of a galactosyl residue to the hydroxyproline-linked saccharide on Skp1 protein (fpaA/fpaB). Catalyzes the formation of a Gal-alpha-1,3-Fuc linkage, leading to Gal-Fuc-Gal-GlcNAc-HyPro143-Skp1. The sequence is that of UDP-galactose:fucoside alpha-3-galactosyltransferase (agtA) from Dictyostelium discoideum (Social amoeba).